Consider the following 474-residue polypeptide: Aspartyl/glutamyl-tRNA(Asn/Gln) amidotransferase subunit B (474 aa).

It belongs to the GatB/GatE family. GatB subfamily. In terms of assembly, heterotrimer of A, B and C subunits.

It carries out the reaction L-glutamyl-tRNA(Gln) + L-glutamine + ATP + H2O = L-glutaminyl-tRNA(Gln) + L-glutamate + ADP + phosphate + H(+). The catalysed reaction is L-aspartyl-tRNA(Asn) + L-glutamine + ATP + H2O = L-asparaginyl-tRNA(Asn) + L-glutamate + ADP + phosphate + 2 H(+). Its function is as follows. Allows the formation of correctly charged Asn-tRNA(Asn) or Gln-tRNA(Gln) through the transamidation of misacylated Asp-tRNA(Asn) or Glu-tRNA(Gln) in organisms which lack either or both of asparaginyl-tRNA or glutaminyl-tRNA synthetases. The reaction takes place in the presence of glutamine and ATP through an activated phospho-Asp-tRNA(Asn) or phospho-Glu-tRNA(Gln). The sequence is that of Aspartyl/glutamyl-tRNA(Asn/Gln) amidotransferase subunit B from Desulfotalea psychrophila (strain LSv54 / DSM 12343).